A 263-amino-acid chain; its full sequence is MEGEQIMEYVQETPIIPKRIIHYSIPKQMITKPAPHVEMTLVANTFRDMDLPQHPVIHDCWQNKEYSTQRYSGNVAQQRLSFEEHPNEECQNSVGLIKRVSTFFKKRPLSRKNSIKSIGDVKSEARNRGEGLLGEVDNLNEQNVRENLTSEHEKSPEGDSKRYGLFSFEETPPIQVLEQGNINSELSSFKNTSLAENKRSSDSFVSLKPGEDEHSPLEISTCGNLTEREDLQSGEERFDSAAQNIKVASMKEKKKIFKGNKTD.

Residues 198–224 (KRSSDSFVSLKPGEDEHSPLEISTCGN) form a disordered region.

This is an uncharacterized protein from Saccharomyces cerevisiae (strain ATCC 204508 / S288c) (Baker's yeast).